The chain runs to 183 residues: Adenylate kinase (183 aa).

Position 7-15 (7-15 (GVAGVGKTT)) interacts with ATP.

It belongs to the archaeal adenylate kinase family.

Its subcellular location is the cytoplasm. The enzyme catalyses AMP + ATP = 2 ADP. This is Adenylate kinase (adkA) from Thermoplasma acidophilum (strain ATCC 25905 / DSM 1728 / JCM 9062 / NBRC 15155 / AMRC-C165).